Reading from the N-terminus, the 221-residue chain is uncharacterized protein (221 aa).

The segment covering 1-11 has biased composition (basic residues); it reads MGEKSRRKGPA. Disordered regions lie at residues 1-23 and 139-169; these read MGEK…GRTC and SNFQ…SAPE. Composition is skewed to basic and acidic residues over residues 13-23 and 155-168; these read RHADGKLGRTC and DKRS…RSAP.

This is an uncharacterized protein from Homo sapiens (Human).